Consider the following 319-residue polypeptide: Probable cell division protein WhiA (319 aa).

Residues 278-311 (SLKELGQMLNPPVGKSGVNHRLRRLESLAEAFSR) constitute a DNA-binding region (H-T-H motif).

The protein belongs to the WhiA family.

Its function is as follows. Involved in cell division and chromosome segregation. This chain is Probable cell division protein WhiA, found in Heliobacterium modesticaldum (strain ATCC 51547 / Ice1).